A 288-amino-acid polypeptide reads, in one-letter code: Ribosomal RNA small subunit methyltransferase A (288 aa).

Positions 18, 20, 45, 66, 91, and 118 each coordinate S-adenosyl-L-methionine.

Belongs to the class I-like SAM-binding methyltransferase superfamily. rRNA adenine N(6)-methyltransferase family. RsmA subfamily.

The protein localises to the cytoplasm. The catalysed reaction is adenosine(1518)/adenosine(1519) in 16S rRNA + 4 S-adenosyl-L-methionine = N(6)-dimethyladenosine(1518)/N(6)-dimethyladenosine(1519) in 16S rRNA + 4 S-adenosyl-L-homocysteine + 4 H(+). In terms of biological role, specifically dimethylates two adjacent adenosines (A1518 and A1519) in the loop of a conserved hairpin near the 3'-end of 16S rRNA in the 30S particle. May play a critical role in biogenesis of 30S subunits. The sequence is that of Ribosomal RNA small subunit methyltransferase A from Pasteurella multocida (strain Pm70).